The sequence spans 363 residues: S-methylmethionine--homocysteine S-methyltransferase BHMT2 (363 aa).

One can recognise a Hcy-binding domain in the interval 11-305 (KGILERLDSG…YHIRAIAEEL (295 aa)). Zn(2+) contacts are provided by Cys-208, Cys-290, and Cys-291. Ser-321 is subject to Phosphoserine.

In terms of assembly, homotetramer. Requires Zn(2+) as cofactor. Expressed in fetal heart, lung, liver, kidney and eye.

It carries out the reaction S-methyl-L-methionine + L-homocysteine = 2 L-methionine + H(+). Its pathway is amino-acid biosynthesis; L-methionine biosynthesis via de novo pathway; L-methionine from L-homocysteine (BhmT route): step 1/1. Functionally, involved in the regulation of homocysteine metabolism. Converts homocysteine to methionine using S-methylmethionine (SMM) as a methyl donor. The protein is S-methylmethionine--homocysteine S-methyltransferase BHMT2 (Bhmt2) of Mus musculus (Mouse).